The chain runs to 400 residues: Queuine tRNA-ribosyltransferase catalytic subunit (400 aa).

The active-site Proton acceptor is Asp-89. Substrate-binding positions include 89 to 93, Asp-143, Gln-185, and Gly-212; that span reads DSGGF. The segment at 243–249 is RNA binding; sequence GVGFPVD. Residue Asp-262 is the Nucleophile of the active site. The RNA binding; important for wobble base 34 recognition stretch occupies residues 267–271; sequence TRTAR. Zn(2+)-binding residues include Cys-301, Cys-303, Cys-306, and His-331.

The protein belongs to the queuine tRNA-ribosyltransferase family. As to quaternary structure, heterodimer of a catalytic subunit and an accessory subunit. The cofactor is Zn(2+).

It localises to the cytoplasm. It catalyses the reaction guanosine(34) in tRNA + queuine = queuosine(34) in tRNA + guanine. Functionally, catalytic subunit of the queuine tRNA-ribosyltransferase (TGT) that catalyzes the base-exchange of a guanine (G) residue with queuine (Q) at position 34 (anticodon wobble position) in tRNAs with GU(N) anticodons (tRNA-Asp, -Asn, -His and -Tyr), resulting in the hypermodified nucleoside queuosine (7-(((4,5-cis-dihydroxy-2-cyclopenten-1-yl)amino)methyl)-7-deazaguanosine). Catalysis occurs through a double-displacement mechanism. The nucleophile active site attacks the C1' of nucleotide 34 to detach the guanine base from the RNA, forming a covalent enzyme-RNA intermediate. The proton acceptor active site deprotonates the incoming queuine, allowing a nucleophilic attack on the C1' of the ribose to form the product. This Caenorhabditis elegans protein is Queuine tRNA-ribosyltransferase catalytic subunit.